The sequence spans 264 residues: Putative hydro-lyase Cgl2544/cg2803 (264 aa).

Belongs to the D-glutamate cyclase family.

This is Putative hydro-lyase Cgl2544/cg2803 from Corynebacterium glutamicum (strain ATCC 13032 / DSM 20300 / JCM 1318 / BCRC 11384 / CCUG 27702 / LMG 3730 / NBRC 12168 / NCIMB 10025 / NRRL B-2784 / 534).